Reading from the N-terminus, the 98-residue chain is MTLTKVELADNLIEKLHLNKRDAKELVENFFEEIRVALETGEDVKLSGFGNFELRDKSSRPGRNPKTGESVPVSARRVVAFKPGQKLRARVEKTKPKS.

Residues 54–74 (LRDKSSRPGRNPKTGESVPVS) are disordered.

The protein belongs to the bacterial histone-like protein family. Heterodimer of an alpha and a beta chain.

In terms of biological role, this protein is one of the two subunits of integration host factor, a specific DNA-binding protein that functions in genetic recombination as well as in transcriptional and translational control. In Pasteurella multocida (strain Pm70), this protein is Integration host factor subunit alpha (ihfA).